Here is a 90-residue protein sequence, read N- to C-terminus: Defensin-like protein 193 (90 aa).

Positions Met1–Ala27 are cleaved as a signal peptide. Cystine bridges form between Cys32/Cys86, Cys45/Cys69, Cys54/Cys81, and Cys58/Cys83.

Belongs to the DEFL family. Protease inhibitor I18 (RTI/MTI-2) subfamily.

The protein resides in the secreted. The sequence is that of Defensin-like protein 193 (ATTI2) from Arabidopsis thaliana (Mouse-ear cress).